A 163-amino-acid chain; its full sequence is Nucleotide-binding protein ECA1137 (163 aa).

It belongs to the YajQ family.

Functionally, nucleotide-binding protein. In Pectobacterium atrosepticum (strain SCRI 1043 / ATCC BAA-672) (Erwinia carotovora subsp. atroseptica), this protein is Nucleotide-binding protein ECA1137.